Reading from the N-terminus, the 61-residue chain is Small ribosomal subunit protein uS14B (61 aa).

Zn(2+) contacts are provided by cysteine 24, cysteine 27, cysteine 40, and cysteine 43.

The protein belongs to the universal ribosomal protein uS14 family. Zinc-binding uS14 subfamily. In terms of assembly, part of the 30S ribosomal subunit. Contacts proteins S3 and S10. Zn(2+) serves as cofactor.

Functionally, binds 16S rRNA, required for the assembly of 30S particles and may also be responsible for determining the conformation of the 16S rRNA at the A site. This is Small ribosomal subunit protein uS14B from Lacticaseibacillus paracasei (strain ATCC 334 / BCRC 17002 / CCUG 31169 / CIP 107868 / KCTC 3260 / NRRL B-441) (Lactobacillus paracasei).